A 38-amino-acid polypeptide reads, in one-letter code: DNA binding protein ORF8 (38 aa).

This sequence belongs to the microviridae J protein family.

It localises to the virion. Its subcellular location is the host cytoplasm. In terms of biological role, mediates ssDNA packaging into virion, it locates to the internal surface of the capsid, thereby displacing the internal scaffolding protein during virion formation. Additionally, protein ORF8 plays a role in viral attachment to the host cell. The sequence is that of DNA binding protein ORF8 from Spiroplasma melliferum (SpV4).